The chain runs to 125 residues: Testis-specific protein LINC02914 (125 aa).

The span at 1–12 (MHRKEPGARLEA) shows a compositional bias: basic and acidic residues. Residues 1–45 (MHRKEPGARLEATRGAARPHKQGTKPMITRPSVSQLGEGKCPSSQ) are disordered.

Expressed in testes and ejaculated spermatozoa (at protein level).

Its subcellular location is the cytoplasm. The protein resides in the nucleus. The protein localises to the cell projection. It localises to the cilium. It is found in the flagellum. May play a role in the flagellum biology. This chain is Testis-specific protein LINC02914, found in Homo sapiens (Human).